The chain runs to 366 residues: MLKRTPLYDVYKEYGGKTIDFGGWELPVQFSSIKEEHEAVRTKAGLFDVSHMGEVEVSGKDALSFLQKMMTNDVADLKPGNALYTAMCYPDGGTVDDLLIYQKSESCYLLVINASNIEKDIAWLTEHTEGDVTLTNQSDGISLLAVQGPNAQSVLAKLTECDLSSLKPFTFIDKADVAGRQVLLSRTGYTGEDGFELYCRNEDAVHLFKEILAAGEHEGLVPCGLGARDTLRFEAKLALYGQELTKDITPIEAGIGFAVKHKKDSDFFGKSVLREQKEKGAPRKLVGLEMIEKGIPRHGYAVKKDGVPIGEVTTGTQSPTLKKNIGLALIKTEFSEVGTEVEVEIRKKTVKAKIVRTPFYKRPKQS.

Belongs to the GcvT family. In terms of assembly, the glycine cleavage system is composed of four proteins: P, T, L and H.

The enzyme catalyses N(6)-[(R)-S(8)-aminomethyldihydrolipoyl]-L-lysyl-[protein] + (6S)-5,6,7,8-tetrahydrofolate = N(6)-[(R)-dihydrolipoyl]-L-lysyl-[protein] + (6R)-5,10-methylene-5,6,7,8-tetrahydrofolate + NH4(+). Its function is as follows. The glycine cleavage system catalyzes the degradation of glycine. This Bacillus velezensis (strain DSM 23117 / BGSC 10A6 / LMG 26770 / FZB42) (Bacillus amyloliquefaciens subsp. plantarum) protein is Aminomethyltransferase.